The chain runs to 266 residues: Apolipoprotein A-I (266 aa).

An N-terminal signal peptide occupies residues 1 to 18; the sequence is MKAVVLTLAVLFLTGSQA. 2 tandem repeats follow at residues 67–88 and 89–110. The interval 67 to 266 is 10 X approximate tandem repeats; that stretch reads LKLLDNWDSL…DEATKKLNSQ (200 aa). A Methionine sulfoxide modification is found at M109. One copy of the 3; half-length repeat lies at 111–121; sequence KDLEEVKKKVQ. 5 consecutive repeat copies span residues 122–143, 144–165, 166–187, 188–209, and 210–231. The stretch at 232-242 is one 9; half-length repeat; the sequence is PALEDLRQGLL. The stretch at 243–266 is repeat 10; that stretch reads PVLENFRVSLLAAVDEATKKLNSQ.

It belongs to the apolipoprotein A1/A4/E family. As to quaternary structure, homodimer. Interacts with APOA1BP and CLU. Component of a sperm activating protein complex (SPAP), consisting of APOA1, an immunoglobulin heavy chain, an immunoglobulin light chain and albumin. Interacts with NDRG1. Interacts with SCGB3A2. Interacts with NAXE and YJEFN3. Glycosylated. In terms of processing, palmitoylated. Post-translationally, phosphorylation sites are present in the extracellular medium.

The protein localises to the secreted. Participates in the reverse transport of cholesterol from tissues to the liver for excretion by promoting cholesterol efflux from tissues and by acting as a cofactor for the lecithin cholesterol acyltransferase (LCAT). As part of the SPAP complex, activates spermatozoa motility. The sequence is that of Apolipoprotein A-I (APOA1) from Mirounga angustirostris (Northern elephant seal).